Reading from the N-terminus, the 334-residue chain is Holliday junction branch migration complex subunit RuvB (334 aa).

The segment at 1 to 179 (MTHKISVLHQ…FAFTGRVDYY (179 aa)) is large ATPase domain (RuvB-L). ATP is bound by residues Leu18, Arg19, Gly60, Lys63, Thr64, Ser65, 126-128 (EDF), Arg169, Tyr179, and Arg216. Position 64 (Thr64) interacts with Mg(2+). Residues 180 to 250 (TDEDLVSILS…VAEKALAMLL (71 aa)) are small ATPAse domain (RuvB-S). A head domain (RuvB-H) region spans residues 253-334 (NLGLNEIDIK…RNPKDRWGEE (82 aa)). DNA-binding residues include Arg308 and Arg313.

It belongs to the RuvB family. In terms of assembly, homohexamer. Forms an RuvA(8)-RuvB(12)-Holliday junction (HJ) complex. HJ DNA is sandwiched between 2 RuvA tetramers; dsDNA enters through RuvA and exits via RuvB. An RuvB hexamer assembles on each DNA strand where it exits the tetramer. Each RuvB hexamer is contacted by two RuvA subunits (via domain III) on 2 adjacent RuvB subunits; this complex drives branch migration. In the full resolvosome a probable DNA-RuvA(4)-RuvB(12)-RuvC(2) complex forms which resolves the HJ.

The protein localises to the cytoplasm. The enzyme catalyses ATP + H2O = ADP + phosphate + H(+). The RuvA-RuvB-RuvC complex processes Holliday junction (HJ) DNA during genetic recombination and DNA repair, while the RuvA-RuvB complex plays an important role in the rescue of blocked DNA replication forks via replication fork reversal (RFR). RuvA specifically binds to HJ cruciform DNA, conferring on it an open structure. The RuvB hexamer acts as an ATP-dependent pump, pulling dsDNA into and through the RuvAB complex. RuvB forms 2 homohexamers on either side of HJ DNA bound by 1 or 2 RuvA tetramers; 4 subunits per hexamer contact DNA at a time. Coordinated motions by a converter formed by DNA-disengaged RuvB subunits stimulates ATP hydrolysis and nucleotide exchange. Immobilization of the converter enables RuvB to convert the ATP-contained energy into a lever motion, pulling 2 nucleotides of DNA out of the RuvA tetramer per ATP hydrolyzed, thus driving DNA branch migration. The RuvB motors rotate together with the DNA substrate, which together with the progressing nucleotide cycle form the mechanistic basis for DNA recombination by continuous HJ branch migration. Branch migration allows RuvC to scan DNA until it finds its consensus sequence, where it cleaves and resolves cruciform DNA. This chain is Holliday junction branch migration complex subunit RuvB, found in Chlamydia trachomatis serovar L2 (strain ATCC VR-902B / DSM 19102 / 434/Bu).